Here is a 247-residue protein sequence, read N- to C-terminus: Adenylyl-sulfate kinase (247 aa).

A disordered region spans residues 1–24; sequence MSQSNSDDSASSSTQQAGDGQDDV. 55–62 is a binding site for ATP; that stretch reads GLSGCGKS. Ser146 functions as the Phosphoserine intermediate in the catalytic mechanism.

Belongs to the APS kinase family.

The catalysed reaction is adenosine 5'-phosphosulfate + ATP = 3'-phosphoadenylyl sulfate + ADP + H(+). It functions in the pathway sulfur metabolism; hydrogen sulfide biosynthesis; sulfite from sulfate: step 2/3. In terms of biological role, catalyzes the synthesis of activated sulfate. The sequence is that of Adenylyl-sulfate kinase from Rhodopirellula baltica (strain DSM 10527 / NCIMB 13988 / SH1).